The chain runs to 359 residues: Phospho-N-acetylmuramoyl-pentapeptide-transferase (359 aa).

Helical transmembrane passes span 27-47 (GAFFTALIFGFIFGQPLINAL), 70-90 (TPTMGGLLILAALSLATLLWA), 97-117 (VWLVLGVTWCFGLIGFADDWA), 133-153 (LAIGFVVAFGAALIAAWVHPE), 167-187 (VLLNMGWMYVPFVMIVIVGSA), 198-218 (GLAIMPVMIAAGTLGVIAYAV), 238-258 (LLIFTAGLIGGGLGFLWYNAP), 261-281 (AVFMGDTGSLALGGALGAIAV), 287-307 (IVLAIVGGLFVAEAVSVIVQV), and 336-356 (QVVIRFWIISLILALIGLATL).

The protein belongs to the glycosyltransferase 4 family. MraY subfamily. Requires Mg(2+) as cofactor.

The protein resides in the cell inner membrane. The catalysed reaction is UDP-N-acetyl-alpha-D-muramoyl-L-alanyl-gamma-D-glutamyl-meso-2,6-diaminopimeloyl-D-alanyl-D-alanine + di-trans,octa-cis-undecaprenyl phosphate = di-trans,octa-cis-undecaprenyl diphospho-N-acetyl-alpha-D-muramoyl-L-alanyl-D-glutamyl-meso-2,6-diaminopimeloyl-D-alanyl-D-alanine + UMP. The protein operates within cell wall biogenesis; peptidoglycan biosynthesis. Its function is as follows. Catalyzes the initial step of the lipid cycle reactions in the biosynthesis of the cell wall peptidoglycan: transfers peptidoglycan precursor phospho-MurNAc-pentapeptide from UDP-MurNAc-pentapeptide onto the lipid carrier undecaprenyl phosphate, yielding undecaprenyl-pyrophosphoryl-MurNAc-pentapeptide, known as lipid I. In Jannaschia sp. (strain CCS1), this protein is Phospho-N-acetylmuramoyl-pentapeptide-transferase.